Consider the following 396-residue polypeptide: DNA polymerase IV (396 aa).

The region spanning 5–192 (IFHVDVNSAF…LPVGELFMVG (188 aa)) is the UmuC domain. Mg(2+) contacts are provided by D9 and D111. Residue E112 is part of the active site.

It belongs to the DNA polymerase type-Y family. Monomer. Mg(2+) serves as cofactor.

The protein localises to the cytoplasm. It catalyses the reaction DNA(n) + a 2'-deoxyribonucleoside 5'-triphosphate = DNA(n+1) + diphosphate. In terms of biological role, poorly processive, error-prone DNA polymerase involved in untargeted mutagenesis. Copies undamaged DNA at stalled replication forks, which arise in vivo from mismatched or misaligned primer ends. These misaligned primers can be extended by PolIV. Exhibits no 3'-5' exonuclease (proofreading) activity. May be involved in translesional synthesis, in conjunction with the beta clamp from PolIII. This is DNA polymerase IV from Clostridium acetobutylicum (strain ATCC 824 / DSM 792 / JCM 1419 / IAM 19013 / LMG 5710 / NBRC 13948 / NRRL B-527 / VKM B-1787 / 2291 / W).